The primary structure comprises 176 residues: Urease accessory protein UreE (176 aa).

This sequence belongs to the UreE family.

The protein localises to the cytoplasm. Functionally, involved in urease metallocenter assembly. Binds nickel. Probably functions as a nickel donor during metallocenter assembly. This chain is Urease accessory protein UreE, found in Helicobacter bizzozeronii.